The following is a 205-amino-acid chain: Thymidine kinase (205 aa).

ATP contacts are provided by residues 9–16 (SAMNAGKS) and 87–90 (DESQ). The active-site Proton acceptor is the Glu-88. Residues Cys-145, Cys-147, Cys-182, and His-185 each coordinate Zn(2+).

This sequence belongs to the thymidine kinase family. Homotetramer.

The protein localises to the cytoplasm. The enzyme catalyses thymidine + ATP = dTMP + ADP + H(+). The polypeptide is Thymidine kinase (Salmonella paratyphi A (strain ATCC 9150 / SARB42)).